Consider the following 339-residue polypeptide: 7,8-didemethyl-8-hydroxy-5-deazariboflavin synthase (339 aa).

The 232-residue stretch at 25–256 (ATYSPAYTIV…PDITIQIPPN (232 aa)) folds into the Radical SAM core domain. Cysteine 39, cysteine 43, and cysteine 46 together coordinate [4Fe-4S] cluster.

It belongs to the radical SAM superfamily. CofG family. Consists of two subunits, CofG and CofH. It depends on [4Fe-4S] cluster as a cofactor.

It catalyses the reaction 5-amino-5-(4-hydroxybenzyl)-6-(D-ribitylimino)-5,6-dihydrouracil + S-adenosyl-L-methionine = 7,8-didemethyl-8-hydroxy-5-deazariboflavin + 5'-deoxyadenosine + L-methionine + NH4(+) + H(+). Its pathway is cofactor biosynthesis; coenzyme F0 biosynthesis. Catalyzes the radical-mediated synthesis of 7,8-didemethyl-8-hydroxy-5-deazariboflavin from 5-amino-5-(4-hydroxybenzyl)-6-(D-ribitylimino)-5,6-dihydrouracil. The protein is 7,8-didemethyl-8-hydroxy-5-deazariboflavin synthase of Nostoc sp. (strain PCC 7120 / SAG 25.82 / UTEX 2576).